The following is a 300-amino-acid chain: Putative S-adenosyl-L-methionine-dependent methyltransferase MUL_0817 (300 aa).

S-adenosyl-L-methionine contacts are provided by residues Asp-127 and 156 to 157; that span reads DL.

It belongs to the UPF0677 family.

Its function is as follows. Exhibits S-adenosyl-L-methionine-dependent methyltransferase activity. In Mycobacterium ulcerans (strain Agy99), this protein is Putative S-adenosyl-L-methionine-dependent methyltransferase MUL_0817.